The primary structure comprises 234 residues: Large ribosomal subunit protein bL25 (234 aa).

The interval 1–24 (MATVMELKATARPKSGKGAARAER) is disordered.

It belongs to the bacterial ribosomal protein bL25 family. CTC subfamily. Part of the 50S ribosomal subunit; part of the 5S rRNA/L5/L18/L25 subcomplex. Contacts the 5S rRNA. Binds to the 5S rRNA independently of L5 and L18.

Its function is as follows. This is one of the proteins that binds to the 5S RNA in the ribosome where it forms part of the central protuberance. The polypeptide is Large ribosomal subunit protein bL25 (Rhodopseudomonas palustris (strain BisB5)).